Here is a 115-residue protein sequence, read N- to C-terminus: Ribonuclease P protein component (115 aa).

The protein belongs to the RnpA family. As to quaternary structure, consists of a catalytic RNA component (M1 or rnpB) and a protein subunit.

The catalysed reaction is Endonucleolytic cleavage of RNA, removing 5'-extranucleotides from tRNA precursor.. Its function is as follows. RNaseP catalyzes the removal of the 5'-leader sequence from pre-tRNA to produce the mature 5'-terminus. It can also cleave other RNA substrates such as 4.5S RNA. The protein component plays an auxiliary but essential role in vivo by binding to the 5'-leader sequence and broadening the substrate specificity of the ribozyme. This Staphylococcus carnosus (strain TM300) protein is Ribonuclease P protein component.